The following is a 158-amino-acid chain: SsrA-binding protein (158 aa).

It belongs to the SmpB family.

The protein resides in the cytoplasm. In terms of biological role, required for rescue of stalled ribosomes mediated by trans-translation. Binds to transfer-messenger RNA (tmRNA), required for stable association of tmRNA with ribosomes. tmRNA and SmpB together mimic tRNA shape, replacing the anticodon stem-loop with SmpB. tmRNA is encoded by the ssrA gene; the 2 termini fold to resemble tRNA(Ala) and it encodes a 'tag peptide', a short internal open reading frame. During trans-translation Ala-aminoacylated tmRNA acts like a tRNA, entering the A-site of stalled ribosomes, displacing the stalled mRNA. The ribosome then switches to translate the ORF on the tmRNA; the nascent peptide is terminated with the 'tag peptide' encoded by the tmRNA and targeted for degradation. The ribosome is freed to recommence translation, which seems to be the essential function of trans-translation. This chain is SsrA-binding protein, found in Parafrankia sp. (strain EAN1pec).